The primary structure comprises 185 residues: Ribosome-recycling factor (185 aa).

Belongs to the RRF family.

It is found in the cytoplasm. In terms of biological role, responsible for the release of ribosomes from messenger RNA at the termination of protein biosynthesis. May increase the efficiency of translation by recycling ribosomes from one round of translation to another. The sequence is that of Ribosome-recycling factor from Pasteurella multocida (strain Pm70).